The sequence spans 468 residues: Protein phosphatase ppm-1.A (468 aa).

The segment at 1–23 (MTISRADLQIASSAEPKTHGNLN) is disordered. In terms of domain architecture, PPM-type phosphatase spans 106-381 (RYGMSSMQGW…DNMTMVVVCF (276 aa)). 4 residues coordinate Mn(2+): aspartate 145, glycine 146, aspartate 329, and aspartate 372.

It belongs to the PP2C family. Requires Mg(2+) as cofactor. It depends on Mn(2+) as a cofactor. As to expression, expressed in neurons of the nerve ring and motor neurons of the ventral nerve cord.

The protein localises to the synapse. It carries out the reaction O-phospho-L-seryl-[protein] + H2O = L-seryl-[protein] + phosphate. It catalyses the reaction O-phospho-L-threonyl-[protein] + H2O = L-threonyl-[protein] + phosphate. Functionally, probable phosphatase which regulates axon termination in ALM and PLM neurons, and synaptic branch extension and/or stabilization in PLM neurons. Plays a role in synapse formation in GABAergic DD motor neurons probably by dephosphorylating pmk-3 thereby negatively regulating a MAP kinase pathway that includes dlk-1, mkk-4 and pmk-3. The protein is Protein phosphatase ppm-1.A of Caenorhabditis elegans.